We begin with the raw amino-acid sequence, 276 residues long: ADP-dependent (S)-NAD(P)H-hydrate dehydratase (276 aa).

Positions 7–274 (METLNSINIP…NEIPYAMKQL (268 aa)) constitute a YjeF C-terminal domain. (6S)-NADPHX is bound by residues Ala-42, Gly-105, and His-154. Gly-216 lines the AMP pocket. Asp-217 is a (6S)-NADPHX binding site.

Belongs to the NnrD/CARKD family. Homotetramer. Mg(2+) is required as a cofactor.

It catalyses the reaction (6S)-NADHX + ADP = AMP + phosphate + NADH + H(+). The catalysed reaction is (6S)-NADPHX + ADP = AMP + phosphate + NADPH + H(+). Functionally, catalyzes the dehydration of the S-form of NAD(P)HX at the expense of ADP, which is converted to AMP. Together with NAD(P)HX epimerase, which catalyzes the epimerization of the S- and R-forms, the enzyme allows the repair of both epimers of NAD(P)HX, a damaged form of NAD(P)H that is a result of enzymatic or heat-dependent hydration. The sequence is that of ADP-dependent (S)-NAD(P)H-hydrate dehydratase from Staphylococcus aureus (strain NCTC 8325 / PS 47).